Here is a 169-residue protein sequence, read N- to C-terminus: Disulfide bond formation protein B (169 aa).

The Cytoplasmic segment spans residues Met-1–Ser-13. The chain crosses the membrane as a helical span at residues Trp-14–Tyr-30. At Phe-31–Val-48 the chain is on the periplasmic side. A disulfide bridge connects residues Cys-40 and Cys-43. The helical transmembrane segment at Ala-49–Pro-64 threads the bilayer. Over Ala-65 to Ala-71 the chain is Cytoplasmic. A helical membrane pass occupies residues Leu-72–Leu-89. Over Glu-90–Glu-144 the chain is Periplasmic. A disulfide bridge links Cys-104 with Cys-130. The helical transmembrane segment at Trp-145 to Pro-163 threads the bilayer. The Cytoplasmic portion of the chain corresponds to Met-164–Ala-169.

It belongs to the DsbB family.

Its subcellular location is the cell inner membrane. In terms of biological role, required for disulfide bond formation in some periplasmic proteins. Acts by oxidizing the DsbA protein. The polypeptide is Disulfide bond formation protein B (Shewanella amazonensis (strain ATCC BAA-1098 / SB2B)).